Here is a 292-residue protein sequence, read N- to C-terminus: Acetylglutamate kinase (292 aa).

Residues glycine 64–glycine 65, arginine 86, and asparagine 190 contribute to the substrate site.

This sequence belongs to the acetylglutamate kinase family. ArgB subfamily.

The protein localises to the cytoplasm. It carries out the reaction N-acetyl-L-glutamate + ATP = N-acetyl-L-glutamyl 5-phosphate + ADP. It functions in the pathway amino-acid biosynthesis; L-arginine biosynthesis; N(2)-acetyl-L-ornithine from L-glutamate: step 2/4. Catalyzes the ATP-dependent phosphorylation of N-acetyl-L-glutamate. This chain is Acetylglutamate kinase, found in Leptospira biflexa serovar Patoc (strain Patoc 1 / Ames).